Reading from the N-terminus, the 389-residue chain is tRNA-specific 2-thiouridylase MnmA (389 aa).

Residues 9–16 and Met35 contribute to the ATP site; that span reads GMSGGVDS. The tract at residues 95–97 is interaction with target base in tRNA; sequence NPD. Cys100 functions as the Nucleophile in the catalytic mechanism. Cys100 and Cys196 are disulfide-bonded. Residue Gly124 coordinates ATP. The tract at residues 146-148 is interaction with tRNA; it reads KDQ. The Cysteine persulfide intermediate role is filled by Cys196. An interaction with tRNA region spans residues 308 to 309; sequence RY.

It belongs to the MnmA/TRMU family.

It localises to the cytoplasm. The catalysed reaction is S-sulfanyl-L-cysteinyl-[protein] + uridine(34) in tRNA + AH2 + ATP = 2-thiouridine(34) in tRNA + L-cysteinyl-[protein] + A + AMP + diphosphate + H(+). Its function is as follows. Catalyzes the 2-thiolation of uridine at the wobble position (U34) of tRNA, leading to the formation of s(2)U34. This chain is tRNA-specific 2-thiouridylase MnmA, found in Burkholderia ambifaria (strain MC40-6).